We begin with the raw amino-acid sequence, 155 residues long: MAAPVTVRVQRDDFDIAAEVSALCRARTDIGAVVTFSGLCRDEAGALSALELEHYPGMAEAEIERICHEAVERFGLQAATAIHRFGRMEPGANIVLVATASPHRQAAFDGANFIMDFLKTSAPFWKKEHHADGSAGDWVSAKDADDAARDRWTRR.

Substrate is bound by residues 39–41 (LCR), 103–104 (HR), lysine 119, and 126–128 (KKE).

It belongs to the MoaE family. As to quaternary structure, heterotetramer of 2 MoaD subunits and 2 MoaE subunits. Also stable as homodimer. The enzyme changes between these two forms during catalysis.

It catalyses the reaction 2 [molybdopterin-synthase sulfur-carrier protein]-C-terminal-Gly-aminoethanethioate + cyclic pyranopterin phosphate + H2O = molybdopterin + 2 [molybdopterin-synthase sulfur-carrier protein]-C-terminal Gly-Gly + 2 H(+). It participates in cofactor biosynthesis; molybdopterin biosynthesis. Its function is as follows. Converts molybdopterin precursor Z into molybdopterin. This requires the incorporation of two sulfur atoms into precursor Z to generate a dithiolene group. The sulfur is provided by MoaD. The protein is Molybdopterin synthase catalytic subunit (moaE) of Rhizobium meliloti (strain 1021) (Ensifer meliloti).